The sequence spans 235 residues: Probable WRKY transcription factor 66 (235 aa).

A DNA-binding region (WRKY) is located at residues 79–147 (SPTPAHIDGF…YVGQHACEAP (69 aa)).

It belongs to the WRKY group III family.

Its subcellular location is the nucleus. In terms of biological role, transcription factor. Interacts specifically with the W box (5'-(T)TGAC[CT]-3'), a frequently occurring elicitor-responsive cis-acting element. This is Probable WRKY transcription factor 66 (WRKY66) from Arabidopsis thaliana (Mouse-ear cress).